Reading from the N-terminus, the 356-residue chain is Probable cytosolic iron-sulfur protein assembly protein 1 (356 aa).

6 WD repeats span residues 34-73 (GHKR…IRAE), 89-128 (GHDS…DYEC), 134-173 (EHSQ…DWYC), 179-218 (AHSS…ECVE), 244-291 (HFSG…ATLR), and 319-356 (AHGS…RIWT).

This sequence belongs to the WD repeat CIA1 family.

In terms of biological role, essential component of the cytosolic iron-sulfur (Fe/S) protein assembly machinery. Required for the maturation of extramitochondrial Fe/S proteins. This chain is Probable cytosolic iron-sulfur protein assembly protein 1, found in Malassezia globosa (strain ATCC MYA-4612 / CBS 7966) (Dandruff-associated fungus).